The chain runs to 284 residues: CBY1-interacting BAR domain-containing protein 1-A (284 aa).

Residues 1–48 (MSQTPEARARDNQTRQIQESVNNVEKHFGELCQIFAGYVRKTARLRDK) constitute a mitochondrion transit peptide. The segment at 11-221 (DNQTRQIQES…DIDEEEDLEV (211 aa)) is BAR-like. Coiled coils occupy residues 142 to 184 (RQII…IKKL) and 260 to 284 (NRQK…EDEN). Polar residues predominate over residues 242 to 261 (SRTGSTSRGPSVISQPPGNR). A disordered region spans residues 242-284 (SRTGSTSRGPSVISQPPGNRQKNRIEDEDEEEEDDENSTEDEN). A compositionally biased stretch (acidic residues) spans 267-284 (EDEDEEEEDDENSTEDEN).

Belongs to the CIBAR family.

It localises to the cytoplasm. The protein localises to the cytoskeleton. It is found in the microtubule organizing center. Its subcellular location is the centrosome. The protein resides in the centriole. It localises to the nucleus. The protein localises to the mitochondrion inner membrane. It is found in the cell projection. Its subcellular location is the cilium. The protein resides in the flagellum. Plays a critical role in regulating mitochondrial ultrastructure and function by maintaining the integrity of mitochondrial morphology, particularly the organization of cristae. Plays a crucial role in ciliogenesis. Plays a key role in the correct positioning of the annulus, a septin-based ring structure in the sperm flagellum, serving both as a physical barrier and a membrane diffusion barrier that separates the midpiece (MP) from the principal piece (PP). The chain is CBY1-interacting BAR domain-containing protein 1-A from Xenopus laevis (African clawed frog).